A 216-amino-acid polypeptide reads, in one-letter code: Holliday junction branch migration complex subunit RuvA (216 aa).

Residues 1-64 (MISFIKGVLI…EDAQQLYGFK (64 aa)) form a domain I region. The interval 65 to 143 (SKVDKKVFQE…KMANEIYAQT (79 aa)) is domain II. Residues 144-163 (SGTTTTSQDSQAQQAPTSAV) form a flexible linker region. A domain III region spans residues 164–216 (LANSIFNESVDALLALGYKQKDAEKMSRSAMGDATTAAEVIRKALQGSIRSKR).

Belongs to the RuvA family. As to quaternary structure, homotetramer. Forms an RuvA(8)-RuvB(12)-Holliday junction (HJ) complex. HJ DNA is sandwiched between 2 RuvA tetramers; dsDNA enters through RuvA and exits via RuvB. An RuvB hexamer assembles on each DNA strand where it exits the tetramer. Each RuvB hexamer is contacted by two RuvA subunits (via domain III) on 2 adjacent RuvB subunits; this complex drives branch migration. In the full resolvosome a probable DNA-RuvA(4)-RuvB(12)-RuvC(2) complex forms which resolves the HJ.

It is found in the cytoplasm. In terms of biological role, the RuvA-RuvB-RuvC complex processes Holliday junction (HJ) DNA during genetic recombination and DNA repair, while the RuvA-RuvB complex plays an important role in the rescue of blocked DNA replication forks via replication fork reversal (RFR). RuvA specifically binds to HJ cruciform DNA, conferring on it an open structure. The RuvB hexamer acts as an ATP-dependent pump, pulling dsDNA into and through the RuvAB complex. HJ branch migration allows RuvC to scan DNA until it finds its consensus sequence, where it cleaves and resolves the cruciform DNA. The protein is Holliday junction branch migration complex subunit RuvA of Francisella tularensis subsp. novicida (strain U112).